The sequence spans 264 residues: Thymidylate synthase (264 aa).

DUMP is bound at residue R21. Residue H51 participates in (6R)-5,10-methylene-5,6,7,8-tetrahydrofolate binding. Residue 126-127 (RR) coordinates dUMP. The Nucleophile role is filled by C146. Residues 166–169 (RSAD), N177, and 207–209 (HLY) each bind dUMP. (6R)-5,10-methylene-5,6,7,8-tetrahydrofolate is bound at residue D169. Position 263 (S263) interacts with (6R)-5,10-methylene-5,6,7,8-tetrahydrofolate.

The protein belongs to the thymidylate synthase family. Bacterial-type ThyA subfamily. In terms of assembly, homodimer.

It localises to the cytoplasm. It catalyses the reaction dUMP + (6R)-5,10-methylene-5,6,7,8-tetrahydrofolate = 7,8-dihydrofolate + dTMP. The protein operates within pyrimidine metabolism; dTTP biosynthesis. Its function is as follows. Catalyzes the reductive methylation of 2'-deoxyuridine-5'-monophosphate (dUMP) to 2'-deoxythymidine-5'-monophosphate (dTMP) while utilizing 5,10-methylenetetrahydrofolate (mTHF) as the methyl donor and reductant in the reaction, yielding dihydrofolate (DHF) as a by-product. This enzymatic reaction provides an intracellular de novo source of dTMP, an essential precursor for DNA biosynthesis. This is Thymidylate synthase from Nitrosococcus oceani (strain ATCC 19707 / BCRC 17464 / JCM 30415 / NCIMB 11848 / C-107).